The chain runs to 97 residues: Phosphoribosyl-ATP pyrophosphatase (97 aa).

Belongs to the PRA-PH family.

It is found in the cytoplasm. It carries out the reaction 1-(5-phospho-beta-D-ribosyl)-ATP + H2O = 1-(5-phospho-beta-D-ribosyl)-5'-AMP + diphosphate + H(+). Its pathway is amino-acid biosynthesis; L-histidine biosynthesis; L-histidine from 5-phospho-alpha-D-ribose 1-diphosphate: step 2/9. This chain is Phosphoribosyl-ATP pyrophosphatase, found in Methanoculleus marisnigri (strain ATCC 35101 / DSM 1498 / JR1).